The following is a 133-amino-acid chain: UPF0225 protein BP2036 (133 aa).

This sequence belongs to the UPF0225 family.

The chain is UPF0225 protein BP2036 from Bordetella pertussis (strain Tohama I / ATCC BAA-589 / NCTC 13251).